A 224-amino-acid polypeptide reads, in one-letter code: MKRTKNINQETFRKEWRTHRLAPVALAVSAVFFLAGCEQTDETVSLYQNADDCSSANPSMAAQCTTAYNNALKEAEKTAPKYATKEDCVAEFGEAQCTQTPAPAQAGMAAEPQQSGGMSWMPLMAGYMMGRMMGGGAGFAQQPLFSPKTPASPANGQFVDAAGKNYGNAATGRTMTVPKTALAPKPATTSTITRGGFGETVAKQNSMQRSSASSNSSSSRSMGG.

A disordered region spans residues 180 to 224; the sequence is TALAPKPATTSTITRGGFGETVAKQNSMQRSSASSNSSSSRSMGG. A compositionally biased stretch (low complexity) spans 204 to 224; that stretch reads QNSMQRSSASSNSSSSRSMGG.

This sequence belongs to the UPF0441 family.

In Pectobacterium atrosepticum (strain SCRI 1043 / ATCC BAA-672) (Erwinia carotovora subsp. atroseptica), this protein is UPF0441 protein ECA0329.